Reading from the N-terminus, the 98-residue chain is Flagellar hook-basal body complex protein FliE (98 aa).

The disordered stretch occupies residues K22–T56. A compositionally biased stretch (polar residues) spans T23–T56.

It belongs to the FliE family.

It localises to the bacterial flagellum basal body. This is Flagellar hook-basal body complex protein FliE from Listeria innocua serovar 6a (strain ATCC BAA-680 / CLIP 11262).